The chain runs to 272 residues: Phosphate import ATP-binding protein PstB (272 aa).

Residues 26-267 enclose the ABC transporter domain; that stretch reads VAARNLNFYY…PADRRTQDYI (242 aa). ATP is bound at residue 58–65; it reads GPSGCGKS.

Belongs to the ABC transporter superfamily. Phosphate importer (TC 3.A.1.7) family. In terms of assembly, the complex is composed of two ATP-binding proteins (PstB), two transmembrane proteins (PstC and PstA) and a solute-binding protein (PstS).

The protein localises to the cell inner membrane. It catalyses the reaction phosphate(out) + ATP + H2O = ADP + 2 phosphate(in) + H(+). In terms of biological role, part of the ABC transporter complex PstSACB involved in phosphate import. Responsible for energy coupling to the transport system. This is Phosphate import ATP-binding protein PstB from Nitrobacter hamburgensis (strain DSM 10229 / NCIMB 13809 / X14).